A 121-amino-acid chain; its full sequence is Large ribosomal subunit protein uL14 (121 aa).

It belongs to the universal ribosomal protein uL14 family. Part of the 50S ribosomal subunit. Forms a cluster with proteins L3 and L19. In the 70S ribosome, L14 and L19 interact and together make contacts with the 16S rRNA in bridges B5 and B8.

In terms of biological role, binds to 23S rRNA. Forms part of two intersubunit bridges in the 70S ribosome. This chain is Large ribosomal subunit protein uL14, found in Synechococcus sp. (strain CC9605).